The primary structure comprises 953 residues: Catenin alpha-2 (953 aa).

Phosphothreonine is present on T632. 3 positions are modified to phosphoserine: S640, S651, and S901. Positions 912–927 are enriched in basic and acidic residues; the sequence is EKKPLVKREKPEEFQT. The disordered stretch occupies residues 912–939; the sequence is EKKPLVKREKPEEFQTRVRRGSQKKHIS. A compositionally biased stretch (basic residues) spans 928-938; that stretch reads RVRRGSQKKHI. Residue S939 is modified to Phosphoserine.

It belongs to the vinculin/alpha-catenin family. As to quaternary structure, interacts with CDH1 and CDH2. Interacts with ZNF639; recruits CTNNA2 to the nucleus. Interacts with F-actin. In terms of tissue distribution, expressed in neural tissues, with strongest expression in fetal and adult brain. Expressed in the developing cortical plate and marginal zone of 20-week-old human fetal brain.

The protein resides in the cell membrane. It localises to the cytoplasm. The protein localises to the cytoskeleton. Its subcellular location is the cell junction. It is found in the adherens junction. The protein resides in the cell projection. It localises to the axon. The protein localises to the nucleus. May function as a linker between cadherin adhesion receptors and the cytoskeleton to regulate cell-cell adhesion and differentiation in the nervous system. Required for proper regulation of cortical neuronal migration and neurite growth. It acts as a negative regulator of Arp2/3 complex activity and Arp2/3-mediated actin polymerization. It thereby suppresses excessive actin branching which would impair neurite growth and stability. Regulates morphological plasticity of synapses and cerebellar and hippocampal lamination during development. Functions in the control of startle modulation. The polypeptide is Catenin alpha-2 (CTNNA2) (Homo sapiens (Human)).